Here is an 820-residue protein sequence, read N- to C-terminus: Mitogen-activated protein kinase kinase kinase kinase 2 (820 aa).

The 258-residue stretch at 16-273 (FELLQRVGAG…AEKLLQHPFT (258 aa)) folds into the Protein kinase domain. ATP is bound by residues 22 to 30 (VGAGTYGDV) and lysine 45. Aspartate 136 functions as the Proton acceptor in the catalytic mechanism. The segment at 294–314 (LGTPSPEDCELETYDMFPDTI) is PEST1. Serine 328 carries the post-translational modification Phosphoserine. The PEST2 stretch occupies residues 344–360 (ETDPLNEPWEEEWTLLG). Residues 387–442 (SEFQELDSPDDTMGTIKRAPFLGPLPTDPPAEEPLSSPPGTLPPPPSGPNSSPLLP) are disordered. At serine 394 the chain carries Phosphoserine. The tract at residues 405–448 (APFLGPLPTDPPAEEPLSSPPGTLPPPPSGPNSSPLLPTAWATM) is PEST3. The segment covering 422-434 (SSPPGTLPPPPSG) has biased composition (pro residues). One can recognise a CNH domain in the interval 482 to 793 (PLRIHAAVTW…IFRVLGAHRD (312 aa)).

It belongs to the protein kinase superfamily. STE Ser/Thr protein kinase family. STE20 subfamily. As to quaternary structure, interacts with TRAF2, TRAF6, MAP3K1/MEKK1 and MAP3K11/MLK3. Interacts with RAB8A. The cofactor is Mg(2+). Post-translationally, polyubiquitinated through 'Lys-48'-polyubiquitin chains, allowing proteasomal turnover. Ubiquitination requires the kinase activity of MAP4K2/GCK. Autophosphorylated in response to tumor necrosis factor (TNF), endotoxins or pro-inflammatory stimuli. Autophosphorylation leads to activation. As to expression, highly expressed in germinal center but not mantle zone B-cells. Also expressed in lung, brain and placenta and at lower levels in other tissues examined.

It localises to the cytoplasm. The protein localises to the basolateral cell membrane. It is found in the golgi apparatus membrane. It carries out the reaction L-seryl-[protein] + ATP = O-phospho-L-seryl-[protein] + ADP + H(+). It catalyses the reaction L-threonyl-[protein] + ATP = O-phospho-L-threonyl-[protein] + ADP + H(+). Its activity is regulated as follows. The tumor necrosis factor (TNF), as well as endotoxins and pro-inflammatory stimuli such as polyinosine-polycytidine (poly(IC)), lipopolysaccharides (LPS), peptidoglycan (PGN), flagellin, or lipid A activate MAP4K2 by promoting its autophosphorylation. Functionally, serine/threonine-protein kinase which acts as an essential component of the MAP kinase signal transduction pathway. Acts as a MAPK kinase kinase kinase (MAP4K) and is an upstream activator of the stress-activated protein kinase/c-Jun N-terminal kinase (SAP/JNK) signaling pathway and to a lesser extent of the p38 MAPKs signaling pathway. Required for the efficient activation of JNKs by TRAF6-dependent stimuli, including pathogen-associated molecular patterns (PAMPs) such as polyinosine-polycytidine (poly(IC)), lipopolysaccharides (LPS), lipid A, peptidoglycan (PGN), or bacterial flagellin. To a lesser degree, IL-1 and engagement of CD40 also stimulate MAP4K2-mediated JNKs activation. The requirement for MAP4K2/GCK is most pronounced for LPS signaling, and extends to LPS stimulation of c-Jun phosphorylation and induction of IL-8. Enhances MAP3K1 oligomerization, which may relieve N-terminal mediated MAP3K1 autoinhibition and lead to activation following autophosphorylation. Also mediates the SAP/JNK signaling pathway and the p38 MAPKs signaling pathway through activation of the MAP3Ks MAP3K10/MLK2 and MAP3K11/MLK3. May play a role in the regulation of vesicle targeting or fusion. regulation of vesicle targeting or fusion. Activator of the Hippo signaling pathway which plays a pivotal role in organ size control and tumor suppression by restricting proliferation and promoting apoptosis. MAP4Ks act in parallel to and are partially redundant with STK3/MST2 and STK4/MST2 in the phosphorylation and activation of LATS1/2, and establish MAP4Ks as components of the expanded Hippo pathway. In Homo sapiens (Human), this protein is Mitogen-activated protein kinase kinase kinase kinase 2.